Reading from the N-terminus, the 294-residue chain is Probable ABC transporter permease protein YqgI (294 aa).

6 helical membrane-spanning segments follow: residues 14-34, 66-86, 99-121, 126-148, 190-210, and 260-280; these read FGLCAAIIAAILVGLFSYIII, FYILFITMLITIPLGVGGGVF, FIRTCIEVLSSLPSIVIGMFGLL, LTGWGYTIIGGALALTVFNLPVM, IITGAILASGRVFGEAAALLF, and AIANGGSAVLVISVLVFNLAA. The ABC transmembrane type-1 domain occupies 62–280; sequence LFNSFYILFI…ISVLVFNLAA (219 aa).

Belongs to the binding-protein-dependent transport system permease family. CysTW subfamily.

The protein resides in the cell membrane. Its function is as follows. Part of the binding-protein-dependent transport system YqgGHIJK. Probably responsible for the translocation of the substrate across the membrane. The protein is Probable ABC transporter permease protein YqgI (yqgI) of Bacillus subtilis (strain 168).